We begin with the raw amino-acid sequence, 100 residues long: Ferredoxin-2 (100 aa).

Residues 4-97 enclose the 2Fe-2S ferredoxin-type domain; sequence YKVTLINEEE…DCTIMTHQES (94 aa). [2Fe-2S] cluster is bound by residues C42, C47, C50, and C81.

It belongs to the 2Fe2S plant-type ferredoxin family. Requires [2Fe-2S] cluster as cofactor.

Functionally, ferredoxins are iron-sulfur proteins that transfer electrons in a wide variety of metabolic reactions. The chain is Ferredoxin-2 from Aphanothece sacrum.